A 463-amino-acid chain; its full sequence is Hydroxyacid-oxoacid transhydrogenase, mitochondrial (463 aa).

The protein belongs to the iron-containing alcohol dehydrogenase family. Hydroxyacid-oxoacid transhydrogenase subfamily.

The protein resides in the mitochondrion. It catalyses the reaction (S)-3-hydroxybutanoate + 2-oxoglutarate = (R)-2-hydroxyglutarate + acetoacetate. The catalysed reaction is 4-hydroxybutanoate + 2-oxoglutarate = (R)-2-hydroxyglutarate + succinate semialdehyde. Its function is as follows. Catalyzes the cofactor-independent reversible oxidation of gamma-hydroxybutyrate (GHB) to succinic semialdehyde (SSA) coupled to reduction of 2-ketoglutarate (2-KG) to D-2-hydroxyglutarate (D-2-HG). L-3-hydroxybutyrate (L-3-OHB) is also a substrate for HOT when using 2-KG as hydrogen acceptor, resulting in the formation of D-2-HG. The chain is Hydroxyacid-oxoacid transhydrogenase, mitochondrial (adhfe1) from Xenopus tropicalis (Western clawed frog).